Here is a 450-residue protein sequence, read N- to C-terminus: tRNA modification GTPase MnmE (450 aa).

Lys21, Glu78, and Lys117 together coordinate (6S)-5-formyl-5,6,7,8-tetrahydrofolate. The region spanning 213–376 is the TrmE-type G domain; that stretch reads GHALSIVGKP…LSQKISAFFP (164 aa). Residue Asn223 participates in K(+) binding. Residues 223 to 228, 242 to 248, and 267 to 270 contribute to the GTP site; these read NAGKSS, SDIKGTT, and DTAG. Residue Ser227 participates in Mg(2+) binding. Residues Ser242, Ile244, and Thr247 each coordinate K(+). Position 248 (Thr248) interacts with Mg(2+). Position 450 (Lys450) interacts with (6S)-5-formyl-5,6,7,8-tetrahydrofolate.

The protein belongs to the TRAFAC class TrmE-Era-EngA-EngB-Septin-like GTPase superfamily. TrmE GTPase family. As to quaternary structure, homodimer. Heterotetramer of two MnmE and two MnmG subunits. Requires K(+) as cofactor.

The protein resides in the cytoplasm. Its function is as follows. Exhibits a very high intrinsic GTPase hydrolysis rate. Involved in the addition of a carboxymethylaminomethyl (cmnm) group at the wobble position (U34) of certain tRNAs, forming tRNA-cmnm(5)s(2)U34. The chain is tRNA modification GTPase MnmE from Helicobacter pylori (strain Shi470).